The chain runs to 96 residues: Large ribosomal subunit protein bL27 (96 aa).

Positions 1 to 9 are excised as a propeptide; it reads MLRLDLQFF. Residues 14 to 36 are disordered; it reads GVGSTKNGRDSQSKRLGAKRADG.

It belongs to the bacterial ribosomal protein bL27 family. Post-translationally, the N-terminus is cleaved by ribosomal processing cysteine protease Prp.

The sequence is that of Large ribosomal subunit protein bL27 from Bacillus anthracis (strain A0248).